Consider the following 419-residue polypeptide: MKNYKAIGKIGEGTFSEVMKMQSLRDGNYYACKQMKQRFESIEQVNNLREIQALRRLNPHPNILMLHEVVFDRKSGSLALICELMDMNIYELIRGRRYPLSEKKIMHYMYQLCKSLDHIHRNGIFHRDVKPENILIKQDVLKLGDFGSCRSVYSKQPYTEYISTRWYRAPECLLTDGFYTYKMDLWSAGCVFYEIASLQPLFPGVNELDQISKIHDVIGTPAQKILTKFKQSRAMNFDFPFKKGSGIPLLTTNLSPQCLSLLHAMVAYDPDERIAAHQALQHPYFQEQRKTEKRALGSHRKAGFPEHPVAPEPLSNSCQISKEGRKQKQSLKQEEDRPKRRGPAYVMELPKLKLSGVVRLSSYSSPTLQSVLGSGTNGRVPVLRPLKCIPASKKTDPQKDLKPAPQQCRLPTIVRKGGR.

The Protein kinase domain maps to 4-285 (YKAIGKIGEG…AHQALQHPYF (282 aa)). ATP-binding positions include 10–18 (IGEGTFSEV) and Lys-33. The Proton acceptor role is filled by Asp-128. Disordered stretches follow at residues 285–344 (FQEQ…RGPA) and 390–419 (PASK…KGGR). Composition is skewed to basic and acidic residues over residues 322–338 (KEGR…EDRP) and 393–402 (KKTDPQKDLK).

The protein belongs to the protein kinase superfamily. CMGC Ser/Thr protein kinase family. CDC2/CDKX subfamily. Requires Mg(2+) as cofactor. Post-translationally, autophosphorylated. Expressed in heart, brain, lung, kidney, and pancreas, and at very low levels in placenta, liver and skeletal muscle. Detected in retina.

The protein resides in the cytoplasm. It localises to the cell projection. It is found in the cilium. The protein localises to the nucleus. The catalysed reaction is L-seryl-[protein] + ATP = O-phospho-L-seryl-[protein] + ADP + H(+). The enzyme catalyses L-threonyl-[protein] + ATP = O-phospho-L-threonyl-[protein] + ADP + H(+). Its activity is regulated as follows. Phosphorylation appears to increase the enzymatic activity. Able to phosphorylate several exogenous substrates and to undergo autophosphorylation. Negatively regulates cilium length in a cAMP and mTORC1 signaling-dependent manner. The chain is MAPK/MAK/MRK overlapping kinase (MOK) from Homo sapiens (Human).